The chain runs to 384 residues: Putative aminohydrolase MTH_994 (384 aa).

Residues histidine 60, histidine 62, histidine 207, and aspartate 291 each coordinate Zn(2+).

Belongs to the metallo-dependent hydrolases superfamily. ATZ/TRZ family.

In Methanothermobacter thermautotrophicus (strain ATCC 29096 / DSM 1053 / JCM 10044 / NBRC 100330 / Delta H) (Methanobacterium thermoautotrophicum), this protein is Putative aminohydrolase MTH_994.